Reading from the N-terminus, the 106-residue chain is UPF0091 protein RP266 (106 aa).

It belongs to the UPF0091 family.

The chain is UPF0091 protein RP266 from Rickettsia prowazekii (strain Madrid E).